Reading from the N-terminus, the 322-residue chain is uncharacterized protein (322 aa).

The 253-residue stretch at 34–286 (KFKQKIFKIP…QRLSKDKVPE (253 aa)) folds into the Radical SAM core domain. Residues Cys-50, Cys-58, and Cys-61 each contribute to the [4Fe-4S] cluster site.

The protein belongs to the radical SAM superfamily. It depends on [4Fe-4S] cluster as a cofactor.

This is an uncharacterized protein from Methanocaldococcus jannaschii (strain ATCC 43067 / DSM 2661 / JAL-1 / JCM 10045 / NBRC 100440) (Methanococcus jannaschii).